Consider the following 109-residue polypeptide: Encapsulin nanocompartment cargo protein EncD (109 aa).

Position 47 (Glu-47) interacts with Fe cation. The disordered stretch occupies residues 61–94; that stretch reads AGGRGAAAPTPAREAPAEAPRLARGSADELHEAA. Residues 66-85 show a composition bias toward low complexity; that stretch reads AAAPTPAREAPAEAPRLARG. The probable targeting peptide stretch occupies residues 100–106; that stretch reads LTVGSLR.

Its subcellular location is the encapsulin nanocompartment. Functionally, cargo protein of a type 1 encapsulin nanocompartment. May help nucleate Fe atoms in the interior of the encapsulin nanocompartment. Present in about 47 copies/encapsulin nanocompartment. In Myxococcus xanthus (strain DK1622), this protein is Encapsulin nanocompartment cargo protein EncD.